The sequence spans 45 residues: uncharacterized protein (45 aa).

This is an uncharacterized protein from Methanocaldococcus jannaschii (strain ATCC 43067 / DSM 2661 / JAL-1 / JCM 10045 / NBRC 100440) (Methanococcus jannaschii).